Here is a 110-residue protein sequence, read N- to C-terminus: Vacuolar ATPase assembly integral membrane protein VMA21 (110 aa).

A disordered region spans residues 1–28 (MTTRRIIGQDGEEKTYLDVDPRGPPGPS). Residues 1 to 44 (MTTRRIIGQDGEEKTYLDVDPRGPPGPSNISPAVPASVIWKLMS) are Cytoplasmic-facing. The segment covering 11-21 (GEEKTYLDVDP) has biased composition (basic and acidic residues). Residues 45–65 (FTFAMITLPIGTYFFTVNYVF) traverse the membrane as a helical segment. Over 66–71 (GGNATY) the chain is Lumenal. The helical transmembrane segment at 72 to 92 (AGALAAIMANVVLIAYVIMAF) threads the bilayer. The Cytoplasmic portion of the chain corresponds to 93–110 (KDDQAEQAEDAREAKKEL). The short motif at 107–110 (KKEL) is the Prevents secretion from ER element.

The protein belongs to the VMA21 family.

Its subcellular location is the endoplasmic reticulum membrane. It localises to the endoplasmic reticulum-Golgi intermediate compartment membrane. The protein localises to the cytoplasmic vesicle. It is found in the COPII-coated vesicle membrane. In terms of biological role, required for the assembly of the V0 complex of the vacuolar ATPase (V-ATPase) in the endoplasmic reticulum. In Phaeosphaeria nodorum (strain SN15 / ATCC MYA-4574 / FGSC 10173) (Glume blotch fungus), this protein is Vacuolar ATPase assembly integral membrane protein VMA21.